The primary structure comprises 615 residues: Medium-chain acyl-CoA ligase ACSF2, mitochondrial (615 aa).

A mitochondrion-targeting transit peptide spans 1–41 (MAVYVGMLRLGRLCAGSSGVLGARAALSRSWQEARLQGVRF). N6-acetyllysine is present on Lys179. Lys182 carries the N6-acetyllysine; alternate modification. Lys182 is modified (N6-succinyllysine; alternate). Position 263–271 (263–271 (TSGTTGSPK)) interacts with ATP. Residues Lys340 and Lys398 each carry the N6-acetyllysine modification. N6-succinyllysine is present on Lys478. ATP contacts are provided by Asp493 and Arg508. An N6-acetyllysine modification is found at Lys510. 2 positions are modified to N6-acetyllysine; alternate: Lys544 and Lys570. Lys544 and Lys570 each carry N6-succinyllysine; alternate. Lys599 contacts ATP. Lys599 carries the N6-succinyllysine modification.

The protein belongs to the ATP-dependent AMP-binding enzyme family.

The protein localises to the mitochondrion. It carries out the reaction a medium-chain fatty acid + ATP + CoA = a medium-chain fatty acyl-CoA + AMP + diphosphate. It catalyses the reaction octanoate + ATP + CoA = octanoyl-CoA + AMP + diphosphate. Acyl-CoA synthases catalyze the initial reaction in fatty acid metabolism, by forming a thioester with CoA. Has some preference toward medium-chain substrates. Plays a role in adipocyte differentiation. In Homo sapiens (Human), this protein is Medium-chain acyl-CoA ligase ACSF2, mitochondrial.